A 287-amino-acid chain; its full sequence is Nucleotide-binding protein GM21_3387 (287 aa).

Position 8-15 (8-15) interacts with ATP; it reads GLSGSGKS. 59–62 is a binding site for GTP; it reads DIRS.

It belongs to the RapZ-like family.

In terms of biological role, displays ATPase and GTPase activities. This is Nucleotide-binding protein GM21_3387 from Geobacter sp. (strain M21).